A 332-amino-acid chain; its full sequence is Phosphate acyltransferase (332 aa).

This sequence belongs to the PlsX family. In terms of assembly, homodimer. Probably interacts with PlsY.

The protein resides in the cytoplasm. It carries out the reaction a fatty acyl-[ACP] + phosphate = an acyl phosphate + holo-[ACP]. The protein operates within lipid metabolism; phospholipid metabolism. Catalyzes the reversible formation of acyl-phosphate (acyl-PO(4)) from acyl-[acyl-carrier-protein] (acyl-ACP). This enzyme utilizes acyl-ACP as fatty acyl donor, but not acyl-CoA. The chain is Phosphate acyltransferase from Fusobacterium nucleatum subsp. nucleatum (strain ATCC 25586 / DSM 15643 / BCRC 10681 / CIP 101130 / JCM 8532 / KCTC 2640 / LMG 13131 / VPI 4355).